A 683-amino-acid chain; its full sequence is Heat shock protein homolog ECU03_0520 (683 aa).

It belongs to the heat shock protein 70 family.

Its subcellular location is the cytoplasm. In Encephalitozoon cuniculi (strain GB-M1) (Microsporidian parasite), this protein is Heat shock protein homolog ECU03_0520.